A 104-amino-acid chain; its full sequence is Nucleoid-associated protein EF_2780 (104 aa).

This sequence belongs to the YbaB/EbfC family. As to quaternary structure, homodimer.

The protein resides in the cytoplasm. It is found in the nucleoid. In terms of biological role, binds to DNA and alters its conformation. May be involved in regulation of gene expression, nucleoid organization and DNA protection. This chain is Nucleoid-associated protein EF_2780, found in Enterococcus faecalis (strain ATCC 700802 / V583).